We begin with the raw amino-acid sequence, 759 residues long: ARF GTPase-activating protein GIT2 (759 aa).

The 124-residue stretch at 1-124 folds into the Arf-GAP domain; the sequence is MSKRLRSNDV…AFVHRLPCRD (124 aa). Residues 11–34 form a C4-type zinc finger; that stretch reads CADCSGPDPSWASVNRGTLICDEC. 3 ANK repeats span residues 132 to 161, 166 to 198, and 199 to 228; these read DLSK…QANF, KGST…THDS, and SGKT…ELTD. Disordered regions lie at residues 376–422 and 469–641; these read VSNQ…DLSD and QSEN…PSTE. The segment covering 385–402 has biased composition (acidic residues); that stretch reads QDNDQPDYDSVASDEDTD. A coiled-coil region spans residues 451–478; the sequence is NNNLSGELRIMQKKLQTLQSENSSLRRQ. A compositionally biased stretch (polar residues) spans 469–489; it reads QSENSSLRRQATASACQVQTA. Residues 555 to 569 show a composition bias toward low complexity; it reads TSSSSLPSFPSTLSW. Positions 570–583 are enriched in basic and acidic residues; that stretch reads SRDESTRRASRLEK.

May form heterooligomers with GIT1. Directly interacts with protein Piccolo/PCLO. Interacts with PPFIA1 and PPFIA2. Interacts with ARHGEF7. Identified in a complex with ARHGEF6 and BIN2. Interacts with PAK3. Interacts with PXN/paxillin. Interacts with TGFB1I1. Forms a complex with EFNB1 and GRB4/NCK2.

Its function is as follows. GTPase-activating protein for ADP ribosylation factor family members, including ARF1. In Rattus norvegicus (Rat), this protein is ARF GTPase-activating protein GIT2 (Git2).